We begin with the raw amino-acid sequence, 467 residues long: Probable amino acid permease 7 (467 aa).

Residues 1-29 (MDIKEDDESRVITPTELQLHDSVTARTGT) are Cytoplasmic-facing. Residues 30–50 (LWTAVAHIITGVIGAGVLSLA) form a helical membrane-spanning segment. Over 51-58 (WATAELGW) the chain is Extracellular. A helical transmembrane segment spans residues 59–79 (IAGPAALIAFAGVTLLSAFLL). At 80-111 (SDCYRFPDPNNGPLRLNSYSQAVKLYLGKKNE) the chain is on the cytoplasmic side. The chain crosses the membrane as a helical span at residues 112–132 (IVCGVVVYISLFGCGIAYTIV). Residues 133-163 (IATCSRAIMKSNCYHRNGHNATCSYGDNNNY) are Extracellular-facing. The next 2 helical transmembrane spans lie at 164 to 184 (FMVL…FHNM) and 185 to 205 (VWLS…GIGL). Residues 206-231 (ALGKIIENRKIEGSIRGIPAENRGEK) are Extracellular-facing. The helical transmembrane segment at 232-252 (VWIVFQALGNIAFSYPFSIIL) threads the bilayer. Residues 253 to 274 (LEIQDTLRSPPAEKQTMKKAST) lie on the Cytoplasmic side of the membrane. A helical membrane pass occupies residues 275-295 (VAVFIQTFFFFCCGCFGYAAF). The Extracellular segment spans residues 296–312 (GDSTPGNLLTGFGFYEP). The chain crosses the membrane as a helical span at residues 313–333 (FWLVDFANACIVLHLVGGYQV). At 334–383 (YSQPIFAAAERSLTKKYPENKFIARFYGFKLPLLRGETVRLNPMRMCLRT) the chain is on the cytoplasmic side. Helical transmembrane passes span 384–404 (MYVL…EVLG) and 405–425 (VVGA…MCIL). Topologically, residues 426 to 443 (QKKIRSWTRPWLLLRGFS) are cytoplasmic. The helical transmembrane segment at 444–464 (FVCLLVCLLSLVGSIYGLVGA) threads the bilayer. Residues 465–467 (KFG) lie on the Extracellular side of the membrane.

This sequence belongs to the amino acid/polyamine transporter 2 family. Amino acid/auxin permease (AAAP) (TC 2.A.18.2) subfamily.

The protein resides in the cell membrane. Its function is as follows. Amino acid-proton symporter. Stereospecific transporter with a broad specificity for neutral amino acids. This Arabidopsis thaliana (Mouse-ear cress) protein is Probable amino acid permease 7 (AAP7).